Reading from the N-terminus, the 88-residue chain is Small ribosomal subunit protein uS17 (88 aa).

This sequence belongs to the universal ribosomal protein uS17 family. In terms of assembly, part of the 30S ribosomal subunit.

Its function is as follows. One of the primary rRNA binding proteins, it binds specifically to the 5'-end of 16S ribosomal RNA. The polypeptide is Small ribosomal subunit protein uS17 (Ligilactobacillus salivarius (strain UCC118) (Lactobacillus salivarius)).